Reading from the N-terminus, the 1640-residue chain is RING finger protein 17 (1640 aa).

The RING-type zinc-finger motif lies at 30–73 (CTRCGRKVSVASGDHHKFPCGHAFCELCLLAPQEYTTSKCTDCE). A Phosphoserine modification is found at Ser-134. Residue Lys-229 is modified to N6-acetyllysine. Disordered stretches follow at residues 348–376 (TDET…TKEM) and 413–435 (DDPI…APVG). Over residues 360–373 (APDRHLEGKKKQPT) the composition is skewed to basic and acidic residues. Tudor domains are found at residues 751–809 (CPLQ…FLEP) and 985–1044 (KWEC…LKTM). Residues 1170 to 1184 (NEHKVPDSKGKKSES) show a composition bias toward basic and acidic residues. The interval 1170 to 1191 (NEHKVPDSKGKKSESRSTGCYR) is disordered. 2 Tudor domains span residues 1246–1303 (SWKK…PDTP) and 1496–1556 (DFSS…LMQY).

In terms of assembly, interacts with MXD1, MXD3, MXD4, MXI1 and PIWIL1. Self-associates. Expressed at high levels in adult testis. Expressed in male germ cells (at protein level). Expressed at lower levels in adult thyroid, submaxillary gland, ovary and epididymis.

Its subcellular location is the cytoplasm. The protein localises to the nucleus. In terms of biological role, seems to be involved in regulation of transcriptional activity of MYC. In vitro, inhibits DNA-binding activity of Mad-MAX heterodimers. Can recruit Mad transcriptional repressors (MXD1, MXD3, MXD4 and MXI1) to the cytoplasm. May be involved in spermiogenesis. This Mus musculus (Mouse) protein is RING finger protein 17 (Rnf17).